The sequence spans 737 residues: Angiotensin-converting enzyme-like protein Ace3 (737 aa).

Positions 1 to 23 are cleaved as a signal peptide; the sequence is MNLPWALLLVLLSHRQLLPWLRT. Residues 24-639 lie on the Extracellular side of the membrane; the sequence is VGETSLNDFY…TDTEPEQAYL (616 aa). Residues 32 to 611 enclose the Peptidase M2 domain; it reads FYSEAQAKLF…VKQGDTLGWP (580 aa). A disulfide bridge links Cys-146 with Cys-152. Positions 180 and 218 each coordinate chloride. An intrachain disulfide couples Cys-346 to Cys-364. Positions 377 and 381 each coordinate Zn(2+). The N-linked (GlcNAc...) asparagine glycan is linked to Asn-390. Glu-405 contributes to the Zn(2+) binding site. Positions 479, 483, and 516 each coordinate chloride. Residues Cys-532 and Cys-544 are joined by a disulfide bond. A helical membrane pass occupies residues 640–660; the sequence is GQWVLLSMSFFMLVLILALGF. Topologically, residues 661 to 700 are cytoplasmic; that stretch reads RLHYLEKQLLDEDTMILKTLPYSYFLGIAMEPHQAARKQW. The helical transmembrane segment at 701–721 threads the bilayer; sequence LLLGLCCILMLCCIGLLIRIV. The Extracellular portion of the chain corresponds to 722–737; sequence TQNTENTPWMKNEGQS.

It belongs to the peptidase M2 family. In terms of assembly, interacts with IZUMO1. It depends on Zn(2+) as a cofactor. Expressed in sperm and testis (at protein level). Expressed in heart and testis. Not detected in kidney, lung, liver, brain, ovary, spleen and thymus.

The protein resides in the cytoplasmic vesicle. It is found in the secretory vesicle. The protein localises to the acrosome membrane. In Mus musculus (Mouse), this protein is Angiotensin-converting enzyme-like protein Ace3.